The sequence spans 93 residues: Small ribosomal subunit protein uS19 (93 aa).

The protein belongs to the universal ribosomal protein uS19 family.

Protein S19 forms a complex with S13 that binds strongly to the 16S ribosomal RNA. This Acidothermus cellulolyticus (strain ATCC 43068 / DSM 8971 / 11B) protein is Small ribosomal subunit protein uS19.